The chain runs to 186 residues: Peptidyl-tRNA hydrolase (186 aa).

Y14 contributes to the tRNA binding site. The active-site Proton acceptor is H19. Positions 64, 66, and 112 each coordinate tRNA.

The protein belongs to the PTH family. Monomer.

It localises to the cytoplasm. It catalyses the reaction an N-acyl-L-alpha-aminoacyl-tRNA + H2O = an N-acyl-L-amino acid + a tRNA + H(+). In terms of biological role, hydrolyzes ribosome-free peptidyl-tRNAs (with 1 or more amino acids incorporated), which drop off the ribosome during protein synthesis, or as a result of ribosome stalling. Functionally, catalyzes the release of premature peptidyl moieties from peptidyl-tRNA molecules trapped in stalled 50S ribosomal subunits, and thus maintains levels of free tRNAs and 50S ribosomes. In Geobacillus thermodenitrificans (strain NG80-2), this protein is Peptidyl-tRNA hydrolase.